Consider the following 1142-residue polypeptide: SNF1-activating kinase 1 (1142 aa).

A disordered region spans residues 22–41; it reads ELEKSGTSSSVSLRSPTKSS. Threonine 43 carries the phosphothreonine modification. Residues 82 to 93 are compositionally biased toward polar residues; sequence QHQQHISSSLAK. The interval 82–107 is disordered; it reads QHQQHISSSLAKTPTTTSSFCSSGSS. Low complexity predominate over residues 94–107; sequence TPTTTSSFCSSGSS. Positions 133 to 448 constitute a Protein kinase domain; that stretch reads YEIIKELGHG…IPAIKKHPFV (316 aa). ATP contacts are provided by residues 139 to 147 and lysine 162; that span reads LGHGQHGKV. The active-site Proton acceptor is the aspartate 277. Disordered stretches follow at residues 634-678, 694-799, 825-875, 919-971, 1005-1027, and 1066-1142; these read SPEA…VLPQ, NSLL…NSPI, SHFN…AYSE, KSSL…QKGS, SQPI…KATT, and STNA…SALP. The segment covering 640–656 has biased composition (polar residues); it reads SVSSVPNLPSAPSSTRL. The span at 694-706 shows a compositional bias: low complexity; the sequence is NSLLRNSSSHLTS. Positions 707–741 are enriched in polar residues; that stretch reads YNSGRPSSRTGRMNSRNQNLPKIPNSLSKISTTKL. Residues 742-751 are compositionally biased toward basic and acidic residues; it reads TELRVPKDSE. Residues 785–799 are compositionally biased toward polar residues; the sequence is NINSSDKSGSKNSPI. Composition is skewed to low complexity over residues 835-868 and 920-936; these read SSQS…RNSS and SSLN…SSSS. A compositionally biased stretch (polar residues) spans 958–971; sequence SKLSELSNSPQKGS. Position 964 is a phosphoserine (serine 964). The span at 1096 to 1111 shows a compositional bias: basic and acidic residues; sequence NDEHARNTSCHGDKGQ. Serine 1126 is subject to Phosphoserine. Residues 1133-1142 are compositionally biased toward basic and acidic residues; that stretch reads NEEKRRSALP.

This sequence belongs to the protein kinase superfamily. Ser/Thr protein kinase family. In terms of assembly, associates with the SNF1 kinase complex. Interacts with SNF1 and REG1. In terms of processing, autophosphorylated.

The protein resides in the cytoplasm. The enzyme catalyses L-seryl-[protein] + ATP = O-phospho-L-seryl-[protein] + ADP + H(+). It carries out the reaction L-threonyl-[protein] + ATP = O-phospho-L-threonyl-[protein] + ADP + H(+). Functionally, serine/threonine-protein kinase that phosphorylates SNF1, the catalytic subunit of the SNF1 kinase complex. Acts as an activator of the SNF1 kinase complex and controls its nuclear localization upon glucose and nitrogen depletion. Also required for SNF1 kinase activation under other stress conditions like alkaline pH or presence of cadmium. In Saccharomyces cerevisiae (strain ATCC 204508 / S288c) (Baker's yeast), this protein is SNF1-activating kinase 1 (SAK1).